The chain runs to 237 residues: ATP synthase subunit a (237 aa).

Transmembrane regions (helical) follow at residues 17 to 37, 78 to 98, 178 to 198, and 201 to 221; these read LSDMLMITITCLIVFIIAVAA, LGVTLIMYVFVANMLGLPFWL, ILLGLLASLGTHYGVLGCGSI, and MVIMVWQAFSIFVGTIQAFIF.

Belongs to the ATPase A chain family. As to quaternary structure, F-type ATPases have 2 components, CF(1) - the catalytic core - and CF(0) - the membrane proton channel. CF(1) has five subunits: alpha(3), beta(3), gamma(1), delta(1), epsilon(1). CF(0) has three main subunits: a(1), b(2) and c(9-12). The alpha and beta chains form an alternating ring which encloses part of the gamma chain. CF(1) is attached to CF(0) by a central stalk formed by the gamma and epsilon chains, while a peripheral stalk is formed by the delta and b chains.

It is found in the cell membrane. Functionally, key component of the proton channel; it plays a direct role in the translocation of protons across the membrane. This Bacillus caldotenax protein is ATP synthase subunit a.